The primary structure comprises 354 residues: Envelope protein US28 (354 aa).

Topologically, residues 1 to 37 (MTPTTTTAELTTEFDYDEDATPCVFTDVLNQSKPVTL) are extracellular. The N-linked (GlcNAc...) asparagine; by host glycan is linked to asparagine 30. The chain crosses the membrane as a helical span at residues 38–58 (FLYGVVFLFGSIGNFLVIFTI). Topologically, residues 59–69 (TWRRRIQCSGD) are cytoplasmic. The chain crosses the membrane as a helical span at residues 70 to 90 (VYFINLAAADLLFVCTLPLWM). At 91–101 (QYLLDHNSLAS) the chain is on the extracellular side. A helical transmembrane segment spans residues 102–122 (VPCTLLTACFYVAMFASLCFI). Over 123–145 (TEIALDRYYAIVYMRYRPVKQAC) the chain is Cytoplasmic. Residues 146 to 166 (LFSIFWWIFAVIIAIPHFMVV) traverse the membrane as a helical segment. Residues 167-183 (TKKDNQCMTDYDYLEVS) lie on the Extracellular side of the membrane. Residues 184–204 (YPIILNVELMLGAFVIPLSVI) traverse the membrane as a helical segment. Topologically, residues 205-228 (SYCYYRISRIVAVSQSRHKGRIVR) are cytoplasmic. A helical membrane pass occupies residues 229–249 (VLIAVVLVFIIFWLPYHLTLF). The Extracellular segment spans residues 250–273 (VDTLKLLKWISSSCEFERSLKRAL). Residues 274-294 (ILTESLAFCHCCLNPLLYVFV) traverse the membrane as a helical segment. Over 295 to 354 (GTKFRQELHCLLAEFRQRLFSRDVSWYHSMSFSRRGSPSRRETSSDTLSDEVCRVSQIIP) the chain is Cytoplasmic.

Belongs to the G-protein coupled receptor 1 family. As to quaternary structure, interacts with host GPRASP1; this interaction targets US28 to lysosomes for degradation. Interacts with host CX3CL1/Fractalkine (via N-terminus). In terms of processing, phosphorylated. High phosphorylation occurs concomitantly with receptor endocytosis and correlate with low receptor presence at the plasma membrane.

The protein localises to the host cell membrane. Its function is as follows. Receptor for a C-C type chemokine. Binds to a great number of different CC-chemokines including CCL5/RANTES, CCL2/MCP-1, CCL3/MIP-1-alpha as well as CX3CL1/Fractalkine. Transduces signals resulting in the activation of MAP kinase signaling pathways and augmentation of intracellular calcium ion levels, leading to alterations in chemotactic behavior of vascular smooth muscle cells and macrophages. The US28 receptor also exhibits high levels of agonist-independent signaling activity and agonist-independent endocytosis. Interacts with the host Gi complex without activating it, thereby probably interfering with the chemokine-Gi signaling. May also function as a G protein sink to sequester G protein from the cell surface via internalization. Interacts with endogenous Gaq/11 subunits and thereby constitutively activates phospholipase C. The chain is Envelope protein US28 (US28) from Human cytomegalovirus (strain Merlin) (HHV-5).